The following is a 375-amino-acid chain: Actin-binding Rho-activating protein (375 aa).

The interval 37 to 101 (ANENSTRQAQ…ATEVSHIKRK (65 aa)) is disordered. Over residues 80–101 (PDGDREGRGSEEATEVSHIKRK) the composition is skewed to basic and acidic residues. Phosphoserine occurs at positions 150 and 182. A disordered region spans residues 175–197 (EPKWKSDSIDTEDSGYGGDMEER). Actin-binding regions lie at residues 193–293 (DMEE…AERA) and 294–375 (KRAE…TLLE). Interaction with actin regions lie at residues 234-279 (SQVD…GDEG) and 346-375 (MRARKHGLVHFEGEMLWQGKDDHVVITLLE).

As to quaternary structure, binds F-actin and ABLIM1, ABLIM2 and ABLIM3. Interaction with ABLIM2 and ABLIM3 enhances activity. Predominantly expressed in heart and skeletal muscle, and expressed at lower levels in adrenal gland, brain, kidney, liver, and testis.

The protein localises to the cytoplasm. It localises to the myofibril. Its subcellular location is the sarcomere. It is found in the cytoskeleton. Its function is as follows. Acts as an activator of serum response factor (SRF)-dependent transcription possibly by inducing nuclear translocation of MKL1 or MKL2 and through a mechanism requiring Rho-actin signaling. In Rattus norvegicus (Rat), this protein is Actin-binding Rho-activating protein.